The following is a 338-amino-acid chain: Ketol-acid reductoisomerase (NADP(+)) (338 aa).

In terms of domain architecture, KARI N-terminal Rossmann spans 1–181 (MNVFYDKDAD…GGGRAGIIET (181 aa)). NADP(+) contacts are provided by residues 24 to 27 (YGSQ), arginine 47, and serine 52. Histidine 107 is an active-site residue. Position 133 (glycine 133) interacts with NADP(+). One can recognise a KARI C-terminal knotted domain in the interval 182–327 (NFREETETDL…AKLRAMMPWI (146 aa)). Mg(2+) is bound by residues aspartate 190, glutamate 194, glutamate 226, and glutamate 230. Serine 251 is a substrate binding site.

Belongs to the ketol-acid reductoisomerase family. It depends on Mg(2+) as a cofactor.

It catalyses the reaction (2R)-2,3-dihydroxy-3-methylbutanoate + NADP(+) = (2S)-2-acetolactate + NADPH + H(+). It carries out the reaction (2R,3R)-2,3-dihydroxy-3-methylpentanoate + NADP(+) = (S)-2-ethyl-2-hydroxy-3-oxobutanoate + NADPH + H(+). It functions in the pathway amino-acid biosynthesis; L-isoleucine biosynthesis; L-isoleucine from 2-oxobutanoate: step 2/4. Its pathway is amino-acid biosynthesis; L-valine biosynthesis; L-valine from pyruvate: step 2/4. Functionally, involved in the biosynthesis of branched-chain amino acids (BCAA). Catalyzes an alkyl-migration followed by a ketol-acid reduction of (S)-2-acetolactate (S2AL) to yield (R)-2,3-dihydroxy-isovalerate. In the isomerase reaction, S2AL is rearranged via a Mg-dependent methyl migration to produce 3-hydroxy-3-methyl-2-ketobutyrate (HMKB). In the reductase reaction, this 2-ketoacid undergoes a metal-dependent reduction by NADPH to yield (R)-2,3-dihydroxy-isovalerate. The chain is Ketol-acid reductoisomerase (NADP(+)) from Burkholderia cenocepacia (strain HI2424).